Here is a 124-residue protein sequence, read N- to C-terminus: Glutaredoxin-2 (124 aa).

An intrachain disulfide couples Cys-13 to Cys-16.

Belongs to the glutaredoxin family. Homodimer.

Its subcellular location is the host cytoplasm. Functionally, glutaredoxin necessary for virion morphogenesis and virus replication. Functions as a thiol-disulfide transfer protein between membrane-associated OPG128 and substrates OPG095 or OPG053. The complete pathway for formation of disulfide bonds in intracellular virion membrane proteins sequentially involves oxidation of OPG072, OPG128 and OPG088. Exhibit thioltransferase and dehydroascorbate reductase activities in vitro. The protein is Glutaredoxin-2 (OPG088) of Homo sapiens (Human).